The following is a 256-amino-acid chain: Thiazole synthase (256 aa).

Lys-95 functions as the Schiff-base intermediate with DXP in the catalytic mechanism. 1-deoxy-D-xylulose 5-phosphate is bound by residues Gly-156, 182 to 183 (AG), and 204 to 205 (NT).

It belongs to the ThiG family. Homotetramer. Forms heterodimers with either ThiH or ThiS.

It localises to the cytoplasm. The enzyme catalyses [ThiS sulfur-carrier protein]-C-terminal-Gly-aminoethanethioate + 2-iminoacetate + 1-deoxy-D-xylulose 5-phosphate = [ThiS sulfur-carrier protein]-C-terminal Gly-Gly + 2-[(2R,5Z)-2-carboxy-4-methylthiazol-5(2H)-ylidene]ethyl phosphate + 2 H2O + H(+). It functions in the pathway cofactor biosynthesis; thiamine diphosphate biosynthesis. Functionally, catalyzes the rearrangement of 1-deoxy-D-xylulose 5-phosphate (DXP) to produce the thiazole phosphate moiety of thiamine. Sulfur is provided by the thiocarboxylate moiety of the carrier protein ThiS. In vitro, sulfur can be provided by H(2)S. The polypeptide is Thiazole synthase (Salmonella schwarzengrund (strain CVM19633)).